We begin with the raw amino-acid sequence, 301 residues long: Ribonuclease HIII (301 aa).

Residues 88-301 enclose the RNase H type-2 domain; the sequence is WSVLGSDEVG…TQKARQLARQ (214 aa). Residues D94, E95, and D197 each contribute to the a divalent metal cation site.

It belongs to the RNase HII family. RnhC subfamily. Mn(2+) is required as a cofactor. Mg(2+) serves as cofactor.

The protein resides in the cytoplasm. It carries out the reaction Endonucleolytic cleavage to 5'-phosphomonoester.. In terms of biological role, endonuclease that specifically degrades the RNA of RNA-DNA hybrids. In Limosilactobacillus fermentum (strain NBRC 3956 / LMG 18251) (Lactobacillus fermentum), this protein is Ribonuclease HIII.